A 373-amino-acid polypeptide reads, in one-letter code: Phosphoserine aminotransferase (373 aa).

Arg-46 contacts L-glutamate. Residues Phe-104, Thr-150, Asp-172, and Gln-195 each contribute to the pyridoxal 5'-phosphate site. Residue Lys-196 is modified to N6-(pyridoxal phosphate)lysine. 247 to 248 (NT) serves as a coordination point for pyridoxal 5'-phosphate.

This sequence belongs to the class-V pyridoxal-phosphate-dependent aminotransferase family. SerC subfamily. Homodimer. Pyridoxal 5'-phosphate serves as cofactor.

It is found in the cytoplasm. The enzyme catalyses O-phospho-L-serine + 2-oxoglutarate = 3-phosphooxypyruvate + L-glutamate. The catalysed reaction is 4-(phosphooxy)-L-threonine + 2-oxoglutarate = (R)-3-hydroxy-2-oxo-4-phosphooxybutanoate + L-glutamate. Its pathway is amino-acid biosynthesis; L-serine biosynthesis; L-serine from 3-phospho-D-glycerate: step 2/3. It participates in cofactor biosynthesis; pyridoxine 5'-phosphate biosynthesis; pyridoxine 5'-phosphate from D-erythrose 4-phosphate: step 3/5. In terms of biological role, catalyzes the reversible conversion of 3-phosphohydroxypyruvate to phosphoserine and of 3-hydroxy-2-oxo-4-phosphonooxybutanoate to phosphohydroxythreonine. In Rhodococcus jostii (strain RHA1), this protein is Phosphoserine aminotransferase.